The sequence spans 709 residues: Fatty acid oxidation complex subunit alpha (709 aa).

An enoyl-CoA hydratase region spans residues 1–188; sequence MEKTFNLTRR…KMGLVNDVVP (188 aa). The 3-hydroxyacyl-CoA dehydrogenase stretch occupies residues 308–709; the sequence is RKVKKAVILG…AMAAEKARFF (402 aa).

It in the N-terminal section; belongs to the enoyl-CoA hydratase/isomerase family. The protein in the central section; belongs to the 3-hydroxyacyl-CoA dehydrogenase family. In terms of assembly, heterotetramer of two alpha chains (FadJ) and two beta chains (FadI).

The protein resides in the cytoplasm. It carries out the reaction a (3S)-3-hydroxyacyl-CoA = a (2E)-enoyl-CoA + H2O. The catalysed reaction is a 4-saturated-(3S)-3-hydroxyacyl-CoA = a (3E)-enoyl-CoA + H2O. It catalyses the reaction a (3S)-3-hydroxyacyl-CoA + NAD(+) = a 3-oxoacyl-CoA + NADH + H(+). The enzyme catalyses (3S)-3-hydroxybutanoyl-CoA = (3R)-3-hydroxybutanoyl-CoA. The protein operates within lipid metabolism; fatty acid beta-oxidation. Its function is as follows. Catalyzes the formation of a hydroxyacyl-CoA by addition of water on enoyl-CoA. Also exhibits 3-hydroxyacyl-CoA epimerase and 3-hydroxyacyl-CoA dehydrogenase activities. This is Fatty acid oxidation complex subunit alpha from Shewanella sp. (strain ANA-3).